A 178-amino-acid chain; its full sequence is Crossover junction endodeoxyribonuclease RuvC (178 aa).

Residues Asp11, Glu71, and Asp143 contribute to the active site. The Mg(2+) site is built by Asp11, Glu71, and Asp143.

The protein belongs to the RuvC family. In terms of assembly, homodimer which binds Holliday junction (HJ) DNA. The HJ becomes 2-fold symmetrical on binding to RuvC with unstacked arms; it has a different conformation from HJ DNA in complex with RuvA. In the full resolvosome a probable DNA-RuvA(4)-RuvB(12)-RuvC(2) complex forms which resolves the HJ. It depends on Mg(2+) as a cofactor.

It localises to the cytoplasm. The enzyme catalyses Endonucleolytic cleavage at a junction such as a reciprocal single-stranded crossover between two homologous DNA duplexes (Holliday junction).. Its function is as follows. The RuvA-RuvB-RuvC complex processes Holliday junction (HJ) DNA during genetic recombination and DNA repair. Endonuclease that resolves HJ intermediates. Cleaves cruciform DNA by making single-stranded nicks across the HJ at symmetrical positions within the homologous arms, yielding a 5'-phosphate and a 3'-hydroxyl group; requires a central core of homology in the junction. The consensus cleavage sequence is 5'-(A/T)TT(C/G)-3'. Cleavage occurs on the 3'-side of the TT dinucleotide at the point of strand exchange. HJ branch migration catalyzed by RuvA-RuvB allows RuvC to scan DNA until it finds its consensus sequence, where it cleaves and resolves the cruciform DNA. The polypeptide is Crossover junction endodeoxyribonuclease RuvC (Neisseria meningitidis serogroup C / serotype 2a (strain ATCC 700532 / DSM 15464 / FAM18)).